A 494-amino-acid polypeptide reads, in one-letter code: Guanosine-5'-triphosphate,3'-diphosphate pyrophosphatase (494 aa).

Belongs to the GppA/Ppx family. GppA subfamily.

It carries out the reaction guanosine 3'-diphosphate 5'-triphosphate + H2O = guanosine 3',5'-bis(diphosphate) + phosphate + H(+). Its pathway is purine metabolism; ppGpp biosynthesis; ppGpp from GTP: step 2/2. Catalyzes the conversion of pppGpp to ppGpp. Guanosine pentaphosphate (pppGpp) is a cytoplasmic signaling molecule which together with ppGpp controls the 'stringent response', an adaptive process that allows bacteria to respond to amino acid starvation, resulting in the coordinated regulation of numerous cellular activities. In Escherichia coli O139:H28 (strain E24377A / ETEC), this protein is Guanosine-5'-triphosphate,3'-diphosphate pyrophosphatase.